A 459-amino-acid polypeptide reads, in one-letter code: Exodeoxyribonuclease 7 large subunit (459 aa).

The protein belongs to the XseA family. In terms of assembly, heterooligomer composed of large and small subunits.

It localises to the cytoplasm. It carries out the reaction Exonucleolytic cleavage in either 5'- to 3'- or 3'- to 5'-direction to yield nucleoside 5'-phosphates.. Functionally, bidirectionally degrades single-stranded DNA into large acid-insoluble oligonucleotides, which are then degraded further into small acid-soluble oligonucleotides. In Pseudomonas fluorescens (strain ATCC BAA-477 / NRRL B-23932 / Pf-5), this protein is Exodeoxyribonuclease 7 large subunit.